Consider the following 5654-residue polypeptide: Mucin-5AC (5654 aa).

Positions 1–27 are cleaved as a signal peptide; sequence MSVGRRKLALLWALALALACTRHTGHA. The tract at residues 27-49 is disordered; that stretch reads AQDGSSESSYKHHPALSPIARGP. One can recognise a VWFD 1 domain in the interval 79-249; sequence RVCSTWGSFH…KMDDPTDQCQ (171 aa). 2 cysteine pairs are disulfide-bonded: cysteine 81–cysteine 211 and cysteine 103–cysteine 248. Glutamate 198 provides a ligand contact to Cu(2+). Asparagine 205 and asparagine 258 each carry an N-linked (GlcNAc...) asparagine glycan. Cu(2+) is bound by residues histidine 320 and histidine 367. Residues 338–394 enclose the TIL 1 domain; sequence CPNNMQYHECRSPCADTCSNQEHSRACEDHCVAGCFCPEGTVLDDIGQTGCVPVSKC. Residues 394-465 enclose the VWFC 1 domain; it reads CACVYNGAAY…CSYVLTKPCD (72 aa). N-linked (GlcNAc...) asparagine glycosylation is present at asparagine 415. The region spanning 432-607 is the VWFD 2 domain; that stretch reads GTCSVLGGAH…NTFKTQAACP (176 aa). 3 disulfide bridges follow: cysteine 434-cysteine 571, cysteine 456-cysteine 606, and cysteine 478-cysteine 486. The N-linked (GlcNAc...) asparagine glycan is linked to asparagine 524. 2 TIL domains span residues 704 to 761 and 818 to 863; these read CPKS…ASNC and DTGA…AEDC. Residues 901-1072 enclose the VWFD 3 domain; that stretch reads ATCAVYGDGH…NSWKLSPSCP (172 aa). Intrachain disulfides connect cysteine 903/cysteine 1036, cysteine 925/cysteine 1071, cysteine 934/cysteine 1033, and cysteine 953/cysteine 960. Asparagine 1308 is a glycosylation site (N-linked (GlcNAc...) asparagine). Residues 1336 to 1377 are disordered; the sequence is LVVSSTHTPSNGPSSAHTGPPSSAWPTTAGTSPRTRLPTASA. Positions 1338–1377 are enriched in polar residues; it reads VSSTHTPSNGPSSAHTGPPSSAWPTTAGTSPRTRLPTASA. A Cys-rich subdomain 1 repeat occupies 1383–1481; that stretch reads CGEKCLWSPW…RVQCCTPLPC (99 aa). Residues 1383 to 4731 form a 9 X Cys-rich subdomain repeats region; sequence CGEKCLWSPW…VLCCETPRGC (3349 aa). C-linked (Man) tryptophan glycosylation occurs at tryptophan 1389. 2 stretches are compositionally biased toward low complexity: residues 1483 to 1539 and 1547 to 1575; these read TSSS…TFST and ATST…PSTS. The segment at 1483 to 1575 is disordered; that stretch reads TSSSPAQTTP…KPTPTEPSTS (93 aa). The Cys-rich subdomain 2 repeat unit spans residues 1577-1677; that stretch reads CLQELCTWTE…IQCCETVNVC (101 aa). Tryptophan 1584 carries a C-linked (Man) tryptophan glycan. The segment at 1688–1733 is disordered; sequence ATTRPTPHPTGAQTQTTFTTHMPSASTEQPTATSRGGPTATSVTQG. Positions 1697 to 1707 are enriched in low complexity; sequence TGAQTQTTFTT. Residues 1708–1733 are compositionally biased toward polar residues; sequence HMPSASTEQPTATSRGGPTATSVTQG. One copy of the Cys-rich subdomain 3 repeat lies at 1743–1847; that stretch reads CHPRCTWTKW…VLCCETPRGC (105 aa). Tryptophan 1749 carries a C-linked (Man) tryptophan glycan. Residues 1849–1948 are disordered; sequence MTSTPGSTSS…KPTPTEPSTS (100 aa). Low complexity-rich tracts occupy residues 1850–1912 and 1920–1948; these read TSTP…TFST and ATST…PSTS. One copy of the Cys-rich subdomain 4 repeat lies at 1950-2050; it reads CLQELCTWTE…IQCCETVNVC (101 aa). Tryptophan 1957 carries a C-linked (Man) tryptophan glycan. The disordered stretch occupies residues 2059–2110; that stretch reads TVATTRPTPHPTGAQTQTTFTTHMPSASTEQPTATSRGGPTATSVTQGTHTT. Residues 2070–2080 show a composition bias toward low complexity; sequence TGAQTQTTFTT. The segment covering 2081–2110 has biased composition (polar residues); it reads HMPSASTEQPTATSRGGPTATSVTQGTHTT. The Cys-rich subdomain 5 repeat unit spans residues 2116-2220; the sequence is CHPRCTWTTW…VLCCETPKGC (105 aa). Tryptophan 2122 carries C-linked (Man) tryptophan glycosylation. Residues 2224–2234 show a composition bias toward low complexity; the sequence is STPVTAPSTPS. The segment at 2224-3214 is disordered; it reads STPVTAPSTP…SHVSISKTTH (991 aa). The span at 2235–2249 shows a compositional bias: polar residues; the sequence is GRATSPTQSTSSWQK. Composition is skewed to low complexity over residues 2250–3184 and 3192–3214; these read SRTT…TPGP and PTTS…KTTH. Positions 2257–3200 are 107 X 8 AA approximate tandem repeats of T-T-S-T-T-S-A-P; it reads TTSTTSTPQT…VPTTSTASVS (944 aa). Threonine 2395, threonine 2405, threonine 2451, threonine 2461, threonine 2531, threonine 2541, threonine 2571, threonine 2581, threonine 2699, threonine 2709, threonine 2883, threonine 2893, threonine 2979, threonine 2989, threonine 3067, and threonine 3077 each carry an O-linked (GalNAc) threonine glycan. Residues 3222 to 3326 form a Cys-rich subdomain 6 repeat; sequence CHLRCTWTKW…VLCCETPKGC (105 aa). Residue tryptophan 3228 is glycosylated (C-linked (Man) tryptophan). The span at 3329-3340 shows a compositional bias: low complexity; it reads TSTPVTAPSTPS. The tract at residues 3329–3515 is disordered; the sequence is TSTPVTAPST…SVSKTTHSQP (187 aa). Polar residues predominate over residues 3341 to 3355; that stretch reads GRATSPTQSTSSWQK. Over residues 3356 to 3513 the composition is skewed to low complexity; it reads SRTTTLVTTS…HVSVSKTTHS (158 aa). The interval 3363–3498 is 17 X 8 AA approximate tandem repeats of T-T-S-T-T-S-A-P; sequence TTSTTSTPQT…VTTTSTASVS (136 aa). Residues 3520-3660 form a Cys-rich subdomain 7 repeat; sequence CHPRCTWTKW…WQKSRTTTLV (141 aa). A C-linked (Man) tryptophan glycan is attached at tryptophan 3526. Positions 3628–3638 are enriched in low complexity; sequence STSVTAPSTPS. Positions 3628–3951 are disordered; that stretch reads STSVTAPSTP…KTTHSQPVTR (324 aa). Positions 3639 to 3660 are enriched in polar residues; sequence GRATSPTQSTSSWQKSRTTTLV. The segment at 3661 to 3931 is 34 X 8 AA approximate tandem repeats of T-T-S-T-T-S-A-P; sequence TSSITSTTQT…VPTTSTASVS (271 aa). Positions 3661–3946 are enriched in low complexity; it reads TSSITSTTQT…HVSVSKTTHS (286 aa). A glycan (N-linked (GlcNAc...) asparagine) is linked at asparagine 3774. The Cys-rich subdomain 8 repeat unit spans residues 3953-4057; the sequence is CHPRCTWTKW…VLCCETPKGC (105 aa). A glycan (C-linked (Man) tryptophan) is linked at tryptophan 3959. The span at 4060–4071 shows a compositional bias: low complexity; that stretch reads TSTPVTAPSTPS. The interval 4060–4625 is disordered; sequence TSTPVTAPST…KTTHSQPVTS (566 aa). Positions 4072–4088 are enriched in polar residues; that stretch reads GRATSPTQSTSSWQKSR. A compositionally biased stretch (low complexity) spans 4089–4610; that stretch reads TTTLVTTSTT…TTPVSKTSTS (522 aa). Residues 4093–4595 form a 58 X 8 AA approximate tandem repeats of T-T-S-T-T-S-A-P region; it reads VTTSTTSTPQ…TSGPGTTPSP (503 aa). 16 O-linked (GalNAc) threonine glycosylation sites follow: threonine 4224, threonine 4234, threonine 4296, threonine 4306, threonine 4320, threonine 4330, threonine 4376, threonine 4386, threonine 4440, threonine 4450, threonine 4480, threonine 4490, threonine 4512, threonine 4522, threonine 4568, and threonine 4578. The segment covering 4611–4624 has biased composition (polar residues); the sequence is HLSVSKTTHSQPVT. The stretch at 4627 to 4731 is one Cys-rich subdomain 9 repeat; that stretch reads CHPLCAWTKW…VLCCETPRGC (105 aa). Tryptophan 4633 carries a C-linked (Man) tryptophan glycan. Residues 4830 to 4849 form a disordered region; that stretch reads TLPPAPATSPSISTSEPVTE. The VWFC 2 domain occupies 4852-4918; sequence CPNAVPPRKK…DGCCHHYQCQ (67 aa). N-linked (GlcNAc...) asparagine glycans are attached at residues asparagine 4869 and asparagine 4942. The region spanning 4919-5103 is the VWFD 4 domain; the sequence is CVCSGWGDPH…VSIPDQPACH (185 aa). Disulfide bonds link cysteine 4921–cysteine 5063, cysteine 4943–cysteine 5102, and cysteine 4967–cysteine 4975. 3 N-linked (GlcNAc...) asparagine glycosylation sites follow: asparagine 5057, asparagine 5093, and asparagine 5236. One can recognise a VWFC 3 domain in the interval 5276-5345; the sequence is PRCLGPHGEP…GQCCPQYSCA (70 aa). N-linked (GlcNAc...) asparagine glycans are attached at residues asparagine 5347, asparagine 5377, asparagine 5386, asparagine 5455, and asparagine 5528. Positions 5381 to 5448 constitute a VWFC 4 domain; the sequence is TVCSINGTLY…QSGQCCGTCV (68 aa). 4 disulfides stabilise this stretch: cysteine 5532–cysteine 5582, cysteine 5546–cysteine 5596, cysteine 5557–cysteine 5612, and cysteine 5561–cysteine 5614. The CTCK domain occupies 5532–5620; it reads CAVYHRSLII…ECGCMGRRCP (89 aa). Asparagine 5591 is a glycosylation site (N-linked (GlcNAc...) asparagine). A disordered region spans residues 5622–5654; that stretch reads PGDTQHSEEAEPEPSQEAESGSWERGVPVSPMH.

In terms of assembly, homomultimer; disulfide-linked. The N- and C-terminus mediate their assembly into higher order structures to form filaments. The CTCK domains of two polypeptides associate in the endoplasmic reticulum to generate intermolecularly disulfide-bonded dimers. These dimers progress to the Golgi apparatus, which is a more acidic environment than the endoplasmic reticulum. Under acidic conditions, the N-termini form non-covalent intermolecular interactions that juxtapose assemblies from different CTCK-linked dimers to produce long, disulfide-linked polymers that remain highly compact until secretion. In terms of processing, C-, O- and N-glycosylated. O-glycosylated on the second and last Thr of the Thr-/Ser-rich tandem repeats TTPSPVPTTSTTSA. One form of glycosylation is also known as Lewis B (LeB) blood group antigen, a tetrasaccharide consisting of N-acetylglucosamine having a fucosyl residue attached. It has a role as an epitope and antigen and functions as a receptor for H.pylori binding and facilitates infection. C-mannosylation in the Cys-rich subdomains may be required for proper folding of these regions and for export from the endoplasmic reticulum during biosynthesis. Proteolytic cleavage in the C-terminal is initiated early in the secretory pathway and does not involve a serine protease. The extent of cleavage is increased in the acidic parts of the secretory pathway. Cleavage generates a reactive group which could link the protein to a primary amide. In terms of tissue distribution, highly expressed in surface mucosal cells of respiratory tract and stomach epithelia. Overexpressed in a number of carcinomas. Also expressed in Barrett's esophagus epithelium and in the proximal duodenum.

It is found in the secreted. Gel-forming glycoprotein of gastric and respiratory tract epithelia that protects the mucosa from infection and chemical damage by binding to inhaled microorganisms and particles that are subsequently removed by the mucociliary system. Interacts with H.pylori in the gastric epithelium, Barrett's esophagus as well as in gastric metaplasia of the duodenum (GMD). The sequence is that of Mucin-5AC from Homo sapiens (Human).